A 286-amino-acid chain; its full sequence is Tyrosine recombinase XerA (286 aa).

Residues 5-82 enclose the Core-binding (CB) domain; that stretch reads TLRSEVLEEF…ALKAYFKFEG (78 aa). The Tyr recombinase domain occupies 98-274; the sequence is TLPKSLTEEE…TAKHLKEAVE (177 aa). Residues R135, K160, H226, R229, and H252 contribute to the active site. Residue Y261 is the O-(3'-phospho-DNA)-tyrosine intermediate of the active site.

Belongs to the 'phage' integrase family. XerA subfamily.

It is found in the cytoplasm. Functionally, site-specific tyrosine recombinase, which acts by catalyzing the cutting and rejoining of the recombining DNA molecules. The polypeptide is Tyrosine recombinase XerA (Pyrococcus furiosus (strain ATCC 43587 / DSM 3638 / JCM 8422 / Vc1)).